A 654-amino-acid polypeptide reads, in one-letter code: Insulin receptor substrate 1 (654 aa).

Positions 3–107 constitute a PH domain; sequence DIKKCGYLRK…WYQAILEVQA (105 aa). Y36 is subject to Phosphotyrosine. An IRS-type PTB domain is found at 126 to 230; that stretch reads FREVWQVSVR…EAMKSLSEEF (105 aa). The disordered stretch occupies residues 228–329; sequence EEFRPRTKSQ…EYGSSPGVLE (102 aa). Positions 235 to 245 are enriched in polar residues; that stretch reads KSQSLSSTPIS. S276 is subject to Phosphoserine. Polar residues predominate over residues 307–321; that stretch reads NESSADYGSASSDEY. Y345 is modified (phosphotyrosine; by INSR). 6 consecutive short sequence motifs (YXXM motif) follow at residues 345 to 348, 384 to 387, 398 to 401, 411 to 414, 430 to 433, and 466 to 469; these read YISM, YAMM, YMPM, YVMM, and YMNM. Phosphotyrosine; by INSR is present on residues Y398 and Y411. A Phosphotyrosine modification is found at Y430. 2 disordered regions span residues 473–494 and 507–532; these read SRSA…GGPC and YKME…VNAG. Over residues 514 to 524 the composition is skewed to low complexity; it reads SARASCSSSSD. Y563 carries the post-translational modification Phosphotyrosine; by INSR.

As to quaternary structure, interacts with the NPXY motif of tyrosine-phosphorylated igf1r and insr via the PTB domain. Binds to phosphatidylinositol 3-kinase p85 subunit via the phosphorylated YXXM motifs.

Its function is as follows. May mediate the control of various cellular processes by insulin. When phosphorylated by the insulin receptor binds specifically to various cellular proteins containing SH2 domains such as phosphatidylinositol 3-kinase p85 subunit or grb2. Activates phosphatidylinositol 3-kinase when bound to the regulatory p85 subunit. This Xenopus tropicalis (Western clawed frog) protein is Insulin receptor substrate 1.